The sequence spans 569 residues: MAEGGSLRNRTRFGSRSNEAMNHVDYPDENFVEEIQLNSDTEVMEKPRPIQIVLAHEDDHNFELDETALESILMQDHIRDLNVVVLSVAGAFRKGKSFLLDFMLRFMYSQSSSWIGGNYEPLTGFTWRGGCERETTGIQIWSEVFVVEKPDGSKVAVILMDTQGAFDSQSTIKDCATVFALSTMTSSVQVYNLSQNIQEDDLQHLQLFTEYGRLAMEEIYKKPFQTLMFLIRDWSYPYEHSYGLEGGNKFLEKRLQVKQNQHEELQNVRKHIHSCFTNIGCFLLPHPGLKVATNPYFDGRLVEIDDEFKKELRELVPLLLAPENLVEKEISGSKVTCRDLLEYFKAYIKIYQGEELPHPKSMLQATAEANNMAAVAGAKDTYSRSMEQVCGGDKPYIAPSDLERKHLDLKETCIKQFRSVKKMGGEEFCRRYQEQLEAEIEETYANFLKHNDGKNIFYAARTPATLFAVMFAMYIISGLTGFIGMNSIATICNLIMGLTLLSFCTWAYVKYSGEFRELGTLIDQIAEIIWEQLLKPLSDNLMEDNIRQTVRNSIKAGLTDQVSGRLKTN.

Positions 1–49 are N-terminal hypervariable region (HVR); it reads MAEGGSLRNRTRFGSRSNEAMNHVDYPDENFVEEIQLNSDTEVMEKPRP. Topologically, residues 1-464 are cytoplasmic; it reads MAEGGSLRNR…NIFYAARTPA (464 aa). Positions 80 to 324 constitute a GB1/RHD3-type G domain; that stretch reads DLNVVVLSVA…LVPLLLAPEN (245 aa). R93, K94, G95, K96, S97, F98, Q163, R232, and D233 together coordinate GDP. Residues R93, K94, G95, K96, S97, and F98 each contribute to the GTP site. S97 contacts Mg(2+). The GTP site is built by R232 and D233. The stretch at 244–272 forms a coiled coil; that stretch reads LEGGNKFLEKRLQVKQNQHEELQNVRKHI. GDP is bound by residues V291 and N294. V291 provides a ligand contact to GTP. The 3HB (three-helix bundle) domain stretch occupies residues 362–453; it reads MLQATAEANN…YANFLKHNDG (92 aa). Residues 454 to 462 form a linker region; it reads KNIFYAART. The helical transmembrane segment at 465–485 threads the bilayer; sequence TLFAVMFAMYIISGLTGFIGM. At 486–487 the chain is on the lumenal side; it reads NS. The chain crosses the membrane as a helical span at residues 488–508; it reads IATICNLIMGLTLLSFCTWAY. The Cytoplasmic segment spans residues 509–569; that stretch reads VKYSGEFREL…DQVSGRLKTN (61 aa). Residues 535 to 569 form an autoinhibitory domain region; the sequence is KPLSDNLMEDNIRQTVRNSIKAGLTDQVSGRLKTN.

It belongs to the TRAFAC class dynamin-like GTPase superfamily. GB1/RHD3 GTPase family. GB1 subfamily. Monomeric and homodimeric. The homodimer, transiently formed by two molecules on opposing membranes, is the active form mediating ER membrane fusion.

The protein localises to the endoplasmic reticulum membrane. The catalysed reaction is GTP + H2O = GDP + phosphate + H(+). Atlastin-2 (ATL2) is a membrane-anchored GTPase that mediates the GTP-dependent fusion of endoplasmic reticulum (ER) membranes, maintaining the continuous ER network. It facilitates the formation of three-way junctions where ER tubules intersect. Two atlastin-2 on neighboring ER tubules bind GTP and form loose homodimers through the GB1/RHD3-type G domains and 3HB regions. Upon GTP hydrolysis, the 3HB regions tighten, pulling the membranes together to drive their fusion. After fusion, the homodimer disassembles upon release of inorganic phosphate (Pi). Subsequently, GDP dissociates, resetting the monomers to a conformation ready for a new fusion cycle. In Xenopus laevis (African clawed frog), this protein is Atlastin-2 (atl2).